We begin with the raw amino-acid sequence, 282 residues long: Bifunctional protein FolD (282 aa).

Residues 164–166 (GAS), Ile-189, and Ile-230 each bind NADP(+).

It belongs to the tetrahydrofolate dehydrogenase/cyclohydrolase family. Homodimer.

It carries out the reaction (6R)-5,10-methylene-5,6,7,8-tetrahydrofolate + NADP(+) = (6R)-5,10-methenyltetrahydrofolate + NADPH. It catalyses the reaction (6R)-5,10-methenyltetrahydrofolate + H2O = (6R)-10-formyltetrahydrofolate + H(+). The protein operates within one-carbon metabolism; tetrahydrofolate interconversion. Its function is as follows. Catalyzes the oxidation of 5,10-methylenetetrahydrofolate to 5,10-methenyltetrahydrofolate and then the hydrolysis of 5,10-methenyltetrahydrofolate to 10-formyltetrahydrofolate. The sequence is that of Bifunctional protein FolD from Campylobacter jejuni subsp. jejuni serotype O:6 (strain 81116 / NCTC 11828).